The following is a 197-amino-acid chain: UDP-N-acetylglucosamine transferase subunit alg13 (197 aa).

Residues 174–197 (VRGPDQKNQPTLEQVMSDEMGFVD) are disordered.

This sequence belongs to the glycosyltransferase 28 family. As to quaternary structure, heterodimer with alg14 to form a functional enzyme.

It localises to the endoplasmic reticulum. It carries out the reaction an N-acetyl-alpha-D-glucosaminyl-diphospho-di-trans,poly-cis-dolichol + UDP-N-acetyl-alpha-D-glucosamine = an N,N'-diacetylchitobiosyl-diphospho-di-trans,poly-cis-dolichol + UDP + H(+). Its function is as follows. Involved in protein N-glycosylation. Essential for the second step of the dolichol-linked oligosaccharide pathway. This Aspergillus fumigatus (strain ATCC MYA-4609 / CBS 101355 / FGSC A1100 / Af293) (Neosartorya fumigata) protein is UDP-N-acetylglucosamine transferase subunit alg13 (alg13).